Consider the following 62-residue polypeptide: Large ribosomal subunit protein bL28 (62 aa).

The tract at residues 1–28 is disordered; that stretch reads MARKCVITGRKSRSGNSRSHAMNASKRT. A compositionally biased stretch (polar residues) spans 14-26; that stretch reads SGNSRSHAMNASK.

This sequence belongs to the bacterial ribosomal protein bL28 family.

The protein is Large ribosomal subunit protein bL28 of Bacillus licheniformis (strain ATCC 14580 / DSM 13 / JCM 2505 / CCUG 7422 / NBRC 12200 / NCIMB 9375 / NCTC 10341 / NRRL NRS-1264 / Gibson 46).